The following is a 360-amino-acid chain: Homoserine O-succinyltransferase (360 aa).

Residue cysteine 146 is the Acyl-thioester intermediate of the active site. Substrate contacts are provided by lysine 167 and serine 196. Histidine 239 (proton acceptor) is an active-site residue. Glutamate 241 is an active-site residue. Arginine 253 serves as a coordination point for substrate.

It belongs to the MetA family.

The protein localises to the cytoplasm. It carries out the reaction L-homoserine + succinyl-CoA = O-succinyl-L-homoserine + CoA. Its pathway is amino-acid biosynthesis; L-methionine biosynthesis via de novo pathway; O-succinyl-L-homoserine from L-homoserine: step 1/1. Functionally, transfers a succinyl group from succinyl-CoA to L-homoserine, forming succinyl-L-homoserine. In vitro, can also use glutaryl-CoA as acyl donor. In Thiothrix nivea (strain ATCC 35100 / DSM 5205 / JP2), this protein is Homoserine O-succinyltransferase.